Reading from the N-terminus, the 555-residue chain is 2-succinyl-5-enolpyruvyl-6-hydroxy-3-cyclohexene-1-carboxylate synthase (555 aa).

The protein belongs to the TPP enzyme family. MenD subfamily. In terms of assembly, homodimer. It depends on Mg(2+) as a cofactor. The cofactor is Mn(2+). Thiamine diphosphate is required as a cofactor.

The enzyme catalyses isochorismate + 2-oxoglutarate + H(+) = 5-enolpyruvoyl-6-hydroxy-2-succinyl-cyclohex-3-ene-1-carboxylate + CO2. The protein operates within quinol/quinone metabolism; 1,4-dihydroxy-2-naphthoate biosynthesis; 1,4-dihydroxy-2-naphthoate from chorismate: step 2/7. Its pathway is quinol/quinone metabolism; menaquinone biosynthesis. Its function is as follows. Catalyzes the thiamine diphosphate-dependent decarboxylation of 2-oxoglutarate and the subsequent addition of the resulting succinic semialdehyde-thiamine pyrophosphate anion to isochorismate to yield 2-succinyl-5-enolpyruvyl-6-hydroxy-3-cyclohexene-1-carboxylate (SEPHCHC). The protein is 2-succinyl-5-enolpyruvyl-6-hydroxy-3-cyclohexene-1-carboxylate synthase of Bacteroides thetaiotaomicron (strain ATCC 29148 / DSM 2079 / JCM 5827 / CCUG 10774 / NCTC 10582 / VPI-5482 / E50).